Here is a 120-residue protein sequence, read N- to C-terminus: Large ribosomal subunit protein bL19 (120 aa).

Belongs to the bacterial ribosomal protein bL19 family.

In terms of biological role, this protein is located at the 30S-50S ribosomal subunit interface and may play a role in the structure and function of the aminoacyl-tRNA binding site. This chain is Large ribosomal subunit protein bL19, found in Renibacterium salmoninarum (strain ATCC 33209 / DSM 20767 / JCM 11484 / NBRC 15589 / NCIMB 2235).